A 219-amino-acid chain; its full sequence is Interleukin-12 subunit alpha (219 aa).

The signal sequence occupies residues 1–22 (MCPARSLLLVATLVLLDYLSLA). 3 N-linked (GlcNAc...) asparagine glycosylation sites follow: N24, N93, and N107. Cystine bridges form between C37–C110, C64–C196, and C85–C123.

Belongs to the IL-6 superfamily. Heterodimer with IL12B; disulfide-linked. This heterodimer is known as interleukin IL-12. Heterodimer with EBI3/IL27B; not disulfide-linked. This heterodimer is known as interleukin IL-35. Interacts with NBR1; this interaction promotes IL-12 secretion.

It is found in the secreted. Heterodimerizes with IL12B to form the IL-12 cytokine or with EBI3/IL27B to form the IL-35 cytokine. IL-12 is primarily produced by professional antigen-presenting cells (APCs) such as B-cells and dendritic cells (DCs) as well as macrophages and granulocytes and regulates T-cell and natural killer-cell responses, induces the production of interferon-gamma (IFN-gamma), favors the differentiation of T-helper 1 (Th1) cells and is an important link between innate resistance and adaptive immunity. Mechanistically, exerts its biological effects through a receptor composed of IL12R1 and IL12R2 subunits. Binding to the receptor results in the rapid tyrosine phosphorylation of a number of cellular substrates including the JAK family kinases TYK2 and JAK2. In turn, recruited STAT4 gets phosphorylated and translocates to the nucleus where it regulates cytokine/growth factor responsive genes. As part of IL-35, plays essential roles in maintaining the immune homeostasis of the liver microenvironment and also functions as an immune-suppressive cytokine. Mediates biological events through unconventional receptors composed of IL12RB2 and gp130/IL6ST heterodimers or homodimers. Signaling requires the transcription factors STAT1 and STAT4, which form a unique heterodimer that binds to distinct DNA sites. The protein is Interleukin-12 subunit alpha (IL12A) of Cercocebus atys (Sooty mangabey).